Here is a 272-residue protein sequence, read N- to C-terminus: Protein UL24 homolog (272 aa).

The protein belongs to the herpesviridae UL24 family.

Its subcellular location is the virion. It is found in the host cytoplasm. The protein localises to the host nucleus. It localises to the host nucleolus. The protein resides in the host Golgi apparatus. In terms of biological role, may participate in nuclear egress of viral particles. Plays a role in the dispersal of several host nucleolar proteins including NCL/nucleolin and NPM1. Since deletion of host NCL/nucleolin negatively impact on nuclear egress, UL24 supposedly acts on this process through its effect on host nucleoli. This chain is Protein UL24 homolog, found in Equine herpesvirus 1 (strain V592) (EHV-1).